A 78-amino-acid chain; its full sequence is uncharacterized protein (78 aa).

A signal peptide spans 1 to 27; it reads MQNSKTDMCAALWAVTGLVLNVAVRFA.

This is an uncharacterized protein from Dryophytes versicolor (chameleon treefrog).